Consider the following 365-residue polypeptide: Histidinol-phosphate aminotransferase (365 aa).

The interval Met-1 to Val-23 is disordered. Lys-221 carries the N6-(pyridoxal phosphate)lysine modification.

The protein belongs to the class-II pyridoxal-phosphate-dependent aminotransferase family. Histidinol-phosphate aminotransferase subfamily. Homodimer. The cofactor is pyridoxal 5'-phosphate.

The catalysed reaction is L-histidinol phosphate + 2-oxoglutarate = 3-(imidazol-4-yl)-2-oxopropyl phosphate + L-glutamate. It functions in the pathway amino-acid biosynthesis; L-histidine biosynthesis; L-histidine from 5-phospho-alpha-D-ribose 1-diphosphate: step 7/9. The protein is Histidinol-phosphate aminotransferase of Rhodopseudomonas palustris (strain BisB18).